Reading from the N-terminus, the 679-residue chain is Shutoff protein (679 aa).

Residues 178-232 (LFDYLIGESQDPNDLDSEYKLAFTDEDLPQEGQAEKTKQRETLGAVATFGAVLLS) form a binding to host EIF4G region. In terms of domain architecture, RRM spans 235–353 (RLFTHPVVIK…ELAGANYAEA (119 aa)). Residues Y252 and Y564 each carry the phosphotyrosine; by host modification. The tract at residues 552–679 (REKSILKRGG…SLQGTRRESS (128 aa)) is disordered. Residues 661–679 (PRQETAEKESLQGTRRESS) show a composition bias toward basic and acidic residues.

The protein belongs to the adenoviridae shutoff protein family. As to quaternary structure, monomer. Interacts with hexon protein; this interaction allows chaperoning and trimerization of hexon proteins. Interacts (via N-terminus) with host initiation factor EIF4G (via C-terminus). Interacts (via RRM domain) with viral mRNAs that contain the tripartite leader; this interaction allows ribosome shunting and expression of viral late mRNAs. In terms of processing, might be cleaved by the viral protease. Phosphorylated. Tyrosine phosphorylation enhances preferential binding to tripartite leader mRNAs and allows ribosome shunting. Post-translationally, methylated. Asymmetric dimethylation by host PRMT1 of the Arg/Gly-rich region may regulate shutoff protein binding to hexon and promote the capsid assembly in the nucleus.

It is found in the host cytoplasm. Protein that inhibits host translation while promoting late viral translation by ribosome shunting. Blocks host cap-dependent translation by binding to eIF4G, displacing MKNK1 from cap initiation complexes and preventing EIF4E phosphorylation. Binds to the tripartite leader sequence of viral late mRNAs and recruits host eIF4G, PABPC1/poly-A binding protein and 40S ribosomes subunits on viral mRNAs, allowing ribosome shunting and efficient translation of late viral mRNAs even though conventional translation via ribosome scanning from the cap has been shut off in the host cell. During assembly, acts as a chaperone protein that helps hexon proteins assembly into trimers. The sequence is that of Shutoff protein from Snake adenovirus serotype 1 (SnAdV-1).